Reading from the N-terminus, the 149-residue chain is General odorant-binding protein 57c (149 aa).

An N-terminal signal peptide occupies residues 1–16; that stretch reads MLKLWLICILTVSVVS. Disulfide bonds link cysteine 32–cysteine 70, cysteine 66–cysteine 117, and cysteine 106–cysteine 126.

Belongs to the PBP/GOBP family.

Its function is as follows. Present in the aqueous fluid surrounding olfactory sensory dendrites and are thought to aid in the capture and transport of hydrophobic odorants into and through this fluid. The sequence is that of General odorant-binding protein 57c from Drosophila melanogaster (Fruit fly).